Consider the following 396-residue polypeptide: Putative arsenical pump-driving ATPase 1 (396 aa).

8 to 15 (GKGGVGKT) is a binding site for ATP.

The protein belongs to the arsA ATPase family.

It catalyses the reaction arsenite(in) + ATP + H2O = arsenite(out) + ADP + phosphate + H(+). In terms of biological role, anion-transporting ATPase. Catalyzes the extrusion of arsenite. The chain is Putative arsenical pump-driving ATPase 1 (arsA1) from Aquifex aeolicus (strain VF5).